A 163-amino-acid chain; its full sequence is Cytochrome c-type biogenesis protein CcmE (163 aa).

Residues 1 to 7 (MTRKQRR) are Cytoplasmic-facing. Residues 8–28 (LVFIGTCGAVLAVALGLVLWA) form a helical; Signal-anchor for type II membrane protein membrane-spanning segment. The Periplasmic portion of the chain corresponds to 29–163 (MSGTIVFFRS…RTASGEARAP (135 aa)). Residues histidine 122 and tyrosine 126 each contribute to the heme site. The tract at residues 134–163 (ALKKSGRWQEGAGHPAPAPPRTASGEARAP) is disordered.

The protein belongs to the CcmE/CycJ family.

The protein localises to the cell inner membrane. Heme chaperone required for the biogenesis of c-type cytochromes. Transiently binds heme delivered by CcmC and transfers the heme to apo-cytochromes in a process facilitated by CcmF and CcmH. This Methylobacterium sp. (strain 4-46) protein is Cytochrome c-type biogenesis protein CcmE.